Consider the following 469-residue polypeptide: Protein HEAT STRESS TOLERANT DWD 1 (469 aa).

Residues 1–15 (MGRNVKTKAKRKNKK) show a composition bias toward basic residues. 2 disordered regions span residues 1-29 (MGRNVKTKAKRKNKKKAEASSSEIPSIPT) and 115-150 (DVVPKTFGNGEDEDEDDEDDSDSDDDDGDEASKTPN). The segment covering 124 to 143 (GEDEDEDDEDDSDSDDDDGD) has biased composition (acidic residues). 6 WD repeats span residues 157–197 (AHHG…NALA), 221–261 (GHKD…WAVD), 267–307 (GHTA…SPAL), 311–351 (AHNA…GGDA), 358–398 (YHKH…DEEE), and 425–464 (QGQKDLKELHWHNQIPGMIISTAGDGFNILMPYNIQNTLP).

The protein belongs to the WD repeat RBAP46/RBAP48/MSI1 family. As to quaternary structure, probable component of CULLIN4 (CUL4) RING ligase (CRL4) complexes. Interacts with DDB1A and DDB1B. Associates with HSP90-1.

Its pathway is protein modification; protein ubiquitination. Its function is as follows. Probable substrate receptor of CRL4 E3 ligase complexes acting as negative regulators of thermotolerance by disturbing the action of HSP90-1 and by preventing the expression of heat-inducible genes (e.g. HSP14.7, HSP21, At2g03020 and WRKY28). In Arabidopsis thaliana (Mouse-ear cress), this protein is Protein HEAT STRESS TOLERANT DWD 1.